The chain runs to 301 residues: Helicase VP6-A (301 aa).

Disordered regions lie at residues Met-1–Thr-99 and Arg-163–Gly-208. 3 stretches are compositionally biased toward basic and acidic residues: residues Glu-8 to Glu-30, Gly-37 to Val-55, and Gly-67 to Gly-81. Lys-82 contributes to the ATP binding site. 2 stretches are compositionally biased toward basic and acidic residues: residues Arg-163 to Lys-177 and Val-186 to Glu-202.

The protein belongs to the orbivirus VP6 family. Homohexamer.

It is found in the virion. It carries out the reaction ATP + H2O = ADP + phosphate + H(+). In terms of biological role, ATP dependent RNA helicase essential for RNA packaging and viral transcription. Possesses ss- and dsRNA-binding capacity. In Bluetongue virus 2 (isolate USA) (BTV 2), this protein is Helicase VP6-A (Segment-9).